Here is a 327-residue protein sequence, read N- to C-terminus: Biotin synthase (327 aa).

The 234-residue stretch at 49–282 folds into the Radical SAM core domain; the sequence is FNKEKIDLCS…KKVIRLCGGR (234 aa). [4Fe-4S] cluster-binding residues include C67, C71, and C74. Residues S110, C142, C201, and R277 each coordinate [2Fe-2S] cluster.

This sequence belongs to the radical SAM superfamily. Biotin synthase family. Homodimer. It depends on [4Fe-4S] cluster as a cofactor. The cofactor is [2Fe-2S] cluster.

The catalysed reaction is (4R,5S)-dethiobiotin + (sulfur carrier)-SH + 2 reduced [2Fe-2S]-[ferredoxin] + 2 S-adenosyl-L-methionine = (sulfur carrier)-H + biotin + 2 5'-deoxyadenosine + 2 L-methionine + 2 oxidized [2Fe-2S]-[ferredoxin]. It functions in the pathway cofactor biosynthesis; biotin biosynthesis; biotin from 7,8-diaminononanoate: step 2/2. Functionally, catalyzes the conversion of dethiobiotin (DTB) to biotin by the insertion of a sulfur atom into dethiobiotin via a radical-based mechanism. The chain is Biotin synthase from Methanococcus maripaludis (strain C7 / ATCC BAA-1331).